Consider the following 104-residue polypeptide: UPF0473 protein SH1304 (104 aa).

This sequence belongs to the UPF0473 family.

The protein is UPF0473 protein SH1304 of Staphylococcus haemolyticus (strain JCSC1435).